A 306-amino-acid chain; its full sequence is UDP-N-acetylenolpyruvoylglucosamine reductase (306 aa).

Positions 34-198 (VGGPADLLIT…LEVTFKLHNS (165 aa)) constitute an FAD-binding PCMH-type domain. Arg177 is an active-site residue. Catalysis depends on Ser227, which acts as the Proton donor. The active site involves Glu297.

It belongs to the MurB family. FAD is required as a cofactor.

It is found in the cytoplasm. It carries out the reaction UDP-N-acetyl-alpha-D-muramate + NADP(+) = UDP-N-acetyl-3-O-(1-carboxyvinyl)-alpha-D-glucosamine + NADPH + H(+). It participates in cell wall biogenesis; peptidoglycan biosynthesis. Functionally, cell wall formation. The chain is UDP-N-acetylenolpyruvoylglucosamine reductase from Clostridium botulinum (strain 657 / Type Ba4).